The chain runs to 350 residues: Probable sugar phosphate/phosphate translocator At4g32390 (350 aa).

The next 10 helical transmembrane spans lie at 15–35, 49–69, 89–109, 112–132, 146–166, 168–188, 205–225, 235–255, 263–283, and 286–306; these read ILLSYTYVAIWIFLSFTVIVY, FPITLTMIHMAFCSSLAVILI, VVPIGALYSLSLWLSNSAYIY, VSFIQMLKALMPVAVYSIGVL, MLSISFGVAIAAYGEAKFDTW, VMLQLGAVAFEATRLVLIQIL, VAPCCLVFLFFPWIFVELPIL, FVIFGTNSVCAFALNLAVFLL, TMNVAGVVKDWLLIAFSWSVI, and TVTPLNLFGYGLAFLGVAYYN. Residues 38 to 155 enclose the EamA domain; the sequence is YILDKKMYNW…MLSISFGVAI (118 aa). Residues 324–350 are disordered; it reads QGDEEEAGKLLEERESEAAAKRNETED.

Belongs to the TPT transporter family. TPT (TC 2.A.7.9) subfamily.

It is found in the membrane. This is Probable sugar phosphate/phosphate translocator At4g32390 from Arabidopsis thaliana (Mouse-ear cress).